Here is an 899-residue protein sequence, read N- to C-terminus: Bifunctional uridylyltransferase/uridylyl-removing enzyme (899 aa).

Residues 1 to 347 (MFISDPTDSL…PESERPEKSV (347 aa)) are uridylyltransferase. Positions 348–718 (LNARFNRVGD…EHRELALDAV (371 aa)) are uridylyl-removing. One can recognise an HD domain in the interval 465–581 (VDAHILLLIR…TKFANLVGNV (117 aa)). 2 ACT domains span residues 719–804 (QIFI…RLPR) and 827–899 (VMSL…TPSC).

It belongs to the GlnD family. Mg(2+) is required as a cofactor.

The catalysed reaction is [protein-PII]-L-tyrosine + UTP = [protein-PII]-uridylyl-L-tyrosine + diphosphate. It catalyses the reaction [protein-PII]-uridylyl-L-tyrosine + H2O = [protein-PII]-L-tyrosine + UMP + H(+). Uridylyltransferase (UTase) activity is inhibited by glutamine, while glutamine activates uridylyl-removing (UR) activity. Functionally, modifies, by uridylylation and deuridylylation, the PII regulatory proteins (GlnB and homologs), in response to the nitrogen status of the cell that GlnD senses through the glutamine level. Under low glutamine levels, catalyzes the conversion of the PII proteins and UTP to PII-UMP and PPi, while under higher glutamine levels, GlnD hydrolyzes PII-UMP to PII and UMP (deuridylylation). Thus, controls uridylylation state and activity of the PII proteins, and plays an important role in the regulation of nitrogen assimilation and metabolism. The sequence is that of Bifunctional uridylyltransferase/uridylyl-removing enzyme from Psychrobacter sp. (strain PRwf-1).